The primary structure comprises 418 residues: Tektin-1 (418 aa).

4 coiled-coil regions span residues 20 to 107, 134 to 177, 266 to 308, and 332 to 383; these read NKSQ…SYKE, QELQ…DLRD, NGLK…QQEG, and IAQY…ENTI.

The protein belongs to the tektin family. As to quaternary structure, microtubule inner protein component of sperm flagellar doublet microtubules. Post-translationally, ubiquitinated, leading to its degradation. Deubiquitinated by USP16, promoting its stability.

The protein localises to the cytoplasm. It localises to the cytoskeleton. Its subcellular location is the cilium axoneme. It is found in the flagellum axoneme. Its function is as follows. Microtubule inner protein (MIP) part of the dynein-decorated doublet microtubules (DMTs) in cilia and flagellar axoneme. Forms filamentous polymers in the walls of ciliary and flagellar microtubules. This Mus musculus (Mouse) protein is Tektin-1 (Tekt1).